The following is a 257-amino-acid chain: Indole-3-glycerol phosphate synthase (257 aa).

Belongs to the TrpC family.

It carries out the reaction 1-(2-carboxyphenylamino)-1-deoxy-D-ribulose 5-phosphate + H(+) = (1S,2R)-1-C-(indol-3-yl)glycerol 3-phosphate + CO2 + H2O. It participates in amino-acid biosynthesis; L-tryptophan biosynthesis; L-tryptophan from chorismate: step 4/5. This chain is Indole-3-glycerol phosphate synthase, found in Chlorobium chlorochromatii (strain CaD3).